The primary structure comprises 335 residues: Legumin type B (335 aa).

Disordered stretches follow at residues 47–87 (PETQ…GNSV) and 102–155 (TEED…GRNG). The span at 105–118 (DTAKRLRSPRDKRN) shows a compositional bias: basic and acidic residues. A compositionally biased stretch (acidic residues) spans 135-144 (QQEEEEQEEE). The region spanning 167-314 (ENIAQPARAD…AFGLRQRQVT (148 aa)) is the Cupin type-1 domain.

It belongs to the 11S seed storage protein (globulins) family. In terms of assembly, hexamer; each subunit is composed of an acidic and a basic chain derived from a single precursor and linked by a disulfide bond.

In terms of biological role, this protein found in the seeds of many leguminous and non-leguminous plants is the source of sulfur-containing amino acids in seed meals. The chain is Legumin type B (LEB7) from Vicia faba (Broad bean).